The primary structure comprises 109 residues: Probable gas vesicle protein J1 (109 aa).

The protein belongs to the gas vesicle GvpA family. In terms of assembly, interacts with GvpA.

It localises to the gas vesicle. Its function is as follows. A minor component of the gas vesicle, might be involved in nucleating gas vesicle formation. Gas vesicles (GV) are hollow, gas filled proteinaceous nanostructures. It is not clear what function GVs perform in soil bacteria. The polypeptide is Probable gas vesicle protein J1 (gvpJ1) (Streptomyces coelicolor (strain ATCC BAA-471 / A3(2) / M145)).